Here is a 176-residue protein sequence, read N- to C-terminus: ATP synthase subunit b 2 (176 aa).

Residues isoleucine 29–proline 49 traverse the membrane as a helical segment.

The protein belongs to the ATPase B chain family. In terms of assembly, F-type ATPases have 2 components, F(1) - the catalytic core - and F(0) - the membrane proton channel. F(1) has five subunits: alpha(3), beta(3), gamma(1), delta(1), epsilon(1). F(0) has three main subunits: a(1), b(2) and c(10-14). The alpha and beta chains form an alternating ring which encloses part of the gamma chain. F(1) is attached to F(0) by a central stalk formed by the gamma and epsilon chains, while a peripheral stalk is formed by the delta and b chains.

It is found in the cell inner membrane. F(1)F(0) ATP synthase produces ATP from ADP in the presence of a proton or sodium gradient. F-type ATPases consist of two structural domains, F(1) containing the extramembraneous catalytic core and F(0) containing the membrane proton channel, linked together by a central stalk and a peripheral stalk. During catalysis, ATP synthesis in the catalytic domain of F(1) is coupled via a rotary mechanism of the central stalk subunits to proton translocation. In terms of biological role, component of the F(0) channel, it forms part of the peripheral stalk, linking F(1) to F(0). The b'-subunit is a diverged and duplicated form of b found in plants and photosynthetic bacteria. The protein is ATP synthase subunit b 2 (atpF2) of Roseobacter denitrificans (strain ATCC 33942 / OCh 114) (Erythrobacter sp. (strain OCh 114)).